The chain runs to 252 residues: Type III pantothenate kinase (252 aa).

An ATP-binding site is contributed by 6 to 13; sequence DIGNTNTV. 105–108 contacts substrate; it reads GADR. Catalysis depends on Asp-107, which acts as the Proton acceptor. K(+) is bound at residue Asp-127. Residue Thr-130 coordinates ATP. Thr-182 is a binding site for substrate.

The protein belongs to the type III pantothenate kinase family. As to quaternary structure, homodimer. NH4(+) serves as cofactor. K(+) is required as a cofactor.

It localises to the cytoplasm. The enzyme catalyses (R)-pantothenate + ATP = (R)-4'-phosphopantothenate + ADP + H(+). It participates in cofactor biosynthesis; coenzyme A biosynthesis; CoA from (R)-pantothenate: step 1/5. Functionally, catalyzes the phosphorylation of pantothenate (Pan), the first step in CoA biosynthesis. The chain is Type III pantothenate kinase from Salinispora arenicola (strain CNS-205).